Reading from the N-terminus, the 612-residue chain is Phosphoenolpyruvate carboxykinase [GTP] (612 aa).

Substrate is bound by residues Arg82 and 221-223; that span reads YGG. Residues Lys230 and His250 each contribute to the Mn(2+) site. Ser272 contacts substrate. A GTP-binding site is contributed by 273 to 278; the sequence is ACGKTN. Residue Cys274 is part of the active site. Asp297 contributes to the Mn(2+) binding site. 388 to 390 contributes to the substrate binding site; that stretch reads NSR. GTP-binding positions include Arg390, Arg421, and 516–519; that span reads FGEN.

The protein belongs to the phosphoenolpyruvate carboxykinase [GTP] family. Monomer. Mn(2+) is required as a cofactor.

Its subcellular location is the cytoplasm. The enzyme catalyses oxaloacetate + GTP = phosphoenolpyruvate + GDP + CO2. It functions in the pathway carbohydrate biosynthesis; gluconeogenesis. Catalyzes the conversion of oxaloacetate (OAA) to phosphoenolpyruvate (PEP), the rate-limiting step in the metabolic pathway that produces glucose from lactate and other precursors derived from the citric acid cycle. This Corynebacterium efficiens (strain DSM 44549 / YS-314 / AJ 12310 / JCM 11189 / NBRC 100395) protein is Phosphoenolpyruvate carboxykinase [GTP].